The following is a 78-amino-acid chain: TP53-regulated inhibitor of apoptosis 1 (78 aa).

Residues 1–52 (MNSVGEECTDMKREYDQCFNRWFAEKFLKGECSGDPCTELFRRYRDCVQKAI) are a coiled coil. The CHCH domain occupies 5–55 (GEECTDMKREYDQCFNRWFAEKFLKGECSGDPCTELFRRYRDCVQKAIKDK). Short sequence motifs (cx9C motif) lie at residues 8-18 (CTDMKREYDQC) and 37-47 (CTELFRRYRDC). Disulfide bonds link C8–C47 and C18–C37.

Belongs to the TRIAP1/MDM35 family. In terms of assembly, monomer. Forms a complex with prelid1 in the mitochondrion intermembrane space. Interacts with prelid3a. As to expression, expressed in the developing pronephros.

Its subcellular location is the mitochondrion. It localises to the mitochondrion intermembrane space. The catalysed reaction is a 1,2-diacyl-sn-glycero-3-phosphate(in) = a 1,2-diacyl-sn-glycero-3-phosphate(out). Functionally, involved in the modulation of the mitochondrial apoptotic pathway by ensuring the accumulation of cardiolipin (CL) in mitochondrial membranes. The triap1:prelid1 complex probably functions as a phosphatidic acid (PA) transporter across the mitochondrion intermembrane space to provide PA for cardiolipin CL synthesis in the inner membrane. Likewise, the triap1:prelid3a complex mediates the transfer of phosphatidic acid (PA) between liposomes (in vitro) and probably functions as a PA transporter across the mitochondrion intermembrane space (in vivo). Mediates cell survival by inhibiting activation of caspase-9 which prevents induction of apoptosis. Required for pronephros development; probably involved at an early stage in the formation of pronephric components derived from the somatic layer. The polypeptide is TP53-regulated inhibitor of apoptosis 1 (Xenopus tropicalis (Western clawed frog)).